Reading from the N-terminus, the 155-residue chain is Mediator of RNA polymerase II transcription subunit 10 (155 aa).

A disordered region spans residues 54–80; it reads SSHTQSHAPDADTAQANPSDPPISTIE.

It belongs to the Mediator complex subunit 10 family. In terms of assembly, component of the Mediator complex.

The protein localises to the nucleus. In terms of biological role, component of the Mediator complex, a coactivator involved in the regulated transcription of nearly all RNA polymerase II-dependent genes. Mediator functions as a bridge to convey information from gene-specific regulatory proteins to the basal RNA polymerase II transcription machinery. Mediator is recruited to promoters by direct interactions with regulatory proteins and serves as a scaffold for the assembly of a functional preinitiation complex with RNA polymerase II and the general transcription factors. This chain is Mediator of RNA polymerase II transcription subunit 10 (nut2), found in Aspergillus terreus (strain NIH 2624 / FGSC A1156).